The primary structure comprises 194 residues: dCTP deaminase, dUMP-forming (194 aa).

DCTP contacts are provided by residues 104 to 109, D122, 130 to 132, Q151, Y165, K172, and Q176; these read RSSLGR and TLE. Catalysis depends on E132, which acts as the Proton donor/acceptor.

The protein belongs to the dCTP deaminase family. Homotrimer.

It catalyses the reaction dCTP + 2 H2O = dUMP + NH4(+) + diphosphate. Its pathway is pyrimidine metabolism; dUMP biosynthesis; dUMP from dCTP: step 1/1. Bifunctional enzyme that catalyzes both the deamination of dCTP to dUTP and the hydrolysis of dUTP to dUMP without releasing the toxic dUTP intermediate. The protein is dCTP deaminase, dUMP-forming of Dictyoglomus thermophilum (strain ATCC 35947 / DSM 3960 / H-6-12).